The primary structure comprises 254 residues: tRNA (guanine-N(1)-)-methyltransferase (254 aa).

Residues Gly113 and 133–138 contribute to the S-adenosyl-L-methionine site; that span reads IGDYVL.

The protein belongs to the RNA methyltransferase TrmD family. As to quaternary structure, homodimer.

It localises to the cytoplasm. It carries out the reaction guanosine(37) in tRNA + S-adenosyl-L-methionine = N(1)-methylguanosine(37) in tRNA + S-adenosyl-L-homocysteine + H(+). In terms of biological role, specifically methylates guanosine-37 in various tRNAs. This is tRNA (guanine-N(1)-)-methyltransferase from Edwardsiella ictaluri (strain 93-146).